The sequence spans 344 residues: N-acetyl-gamma-glutamyl-phosphate reductase (344 aa).

Residue cysteine 149 is part of the active site.

It belongs to the NAGSA dehydrogenase family. Type 1 subfamily.

The protein localises to the cytoplasm. It carries out the reaction N-acetyl-L-glutamate 5-semialdehyde + phosphate + NADP(+) = N-acetyl-L-glutamyl 5-phosphate + NADPH + H(+). It participates in amino-acid biosynthesis; L-arginine biosynthesis; N(2)-acetyl-L-ornithine from L-glutamate: step 3/4. In terms of biological role, catalyzes the NADPH-dependent reduction of N-acetyl-5-glutamyl phosphate to yield N-acetyl-L-glutamate 5-semialdehyde. The protein is N-acetyl-gamma-glutamyl-phosphate reductase of Halorhodospira halophila (strain DSM 244 / SL1) (Ectothiorhodospira halophila (strain DSM 244 / SL1)).